Consider the following 304-residue polypeptide: ATP phosphoribosyltransferase (304 aa).

The protein belongs to the ATP phosphoribosyltransferase family. Long subfamily. The cofactor is Mg(2+).

Its subcellular location is the cytoplasm. The catalysed reaction is 1-(5-phospho-beta-D-ribosyl)-ATP + diphosphate = 5-phospho-alpha-D-ribose 1-diphosphate + ATP. Its pathway is amino-acid biosynthesis; L-histidine biosynthesis; L-histidine from 5-phospho-alpha-D-ribose 1-diphosphate: step 1/9. With respect to regulation, feedback inhibited by histidine. Catalyzes the condensation of ATP and 5-phosphoribose 1-diphosphate to form N'-(5'-phosphoribosyl)-ATP (PR-ATP). Has a crucial role in the pathway because the rate of histidine biosynthesis seems to be controlled primarily by regulation of HisG enzymatic activity. The protein is ATP phosphoribosyltransferase of Xanthomonas campestris pv. campestris (strain 8004).